The primary structure comprises 703 residues: MNPVIKKFQFGQSTVTLETGRIARQASGAVLVTVDDDVSVLVTVVGAKQADPGKGFFPLSVHYQEKTYAAGKIPGGFFKREGRPSEKETLTSRLIDRPIRPLFPEGFMNEVQVVCTVVSTSKKTDPDIAAMIGTSAALAISGIPFDGPIGAARVAFHESTGYLLNPTYEQLAASSLDMVVAGTEEAVLMVESEAKELTEDQMLGAVLFAHDEFQSVIKAVKELAAEAAKPTWDWDWAAAPEATELLGAIRAEFGEAISQAYTITVKADRYARLGELKDQVVAKLSGEEGQPSASDVKAAFGEIEYRTVRENIVNGKPRIDGRDTRTVRPLNIEVGVLPKTHGSALFTRGETQALVVATLGTARDAQLLDTLEGEKKDPFMLHYNFPPFSVGECGRMGGAGRREIGHGRLARRSVQAMLPAADVFPYTIRVVSEITESNGSSSMASVCGASLALMDAGVPMKAPVAGIAMGLVKEGEKFAVLTDILGDEDHLGDMDFKVAGTAKGVTALQMDIKIKGITEEIMEIALGQALEARLNILGQMNQIIGQSRTELSANAPTMIAMKIDTDKIRDVIGKGGATIRAICEETKASIDIEDDGSIKIFGETKEAAEAARQRVLGITAEAEIGKIYVGKVERIVDFGAFVNILPGKDGLVHISMLSDARVEKVTDILKEGQEVEVLVLDVDNRGRIKLSIKDVAAAKASGV.

Residues Asp-489 and Asp-495 each contribute to the Mg(2+) site. One can recognise a KH domain in the interval 556-615 (PTMIAMKIDTDKIRDVIGKGGATIRAICEETKASIDIEDDGSIKIFGETKEAAEAARQRV). In terms of domain architecture, S1 motif spans 625-693 (GKIYVGKVER…NRGRIKLSIK (69 aa)).

Belongs to the polyribonucleotide nucleotidyltransferase family. In terms of assembly, component of the RNA degradosome, which is a multiprotein complex involved in RNA processing and mRNA degradation. The cofactor is Mg(2+).

Its subcellular location is the cytoplasm. The enzyme catalyses RNA(n+1) + phosphate = RNA(n) + a ribonucleoside 5'-diphosphate. Involved in mRNA degradation. Catalyzes the phosphorolysis of single-stranded polyribonucleotides processively in the 3'- to 5'-direction. This Pseudomonas fluorescens (strain ATCC BAA-477 / NRRL B-23932 / Pf-5) protein is Polyribonucleotide nucleotidyltransferase.